The following is a 240-amino-acid chain: 1-(5-phosphoribosyl)-5-[(5-phosphoribosylamino)methylideneamino] imidazole-4-carboxamide isomerase (240 aa).

Catalysis depends on aspartate 8, which acts as the Proton acceptor. Catalysis depends on aspartate 130, which acts as the Proton donor.

This sequence belongs to the HisA/HisF family.

The protein localises to the cytoplasm. It catalyses the reaction 1-(5-phospho-beta-D-ribosyl)-5-[(5-phospho-beta-D-ribosylamino)methylideneamino]imidazole-4-carboxamide = 5-[(5-phospho-1-deoxy-D-ribulos-1-ylimino)methylamino]-1-(5-phospho-beta-D-ribosyl)imidazole-4-carboxamide. It functions in the pathway amino-acid biosynthesis; L-histidine biosynthesis; L-histidine from 5-phospho-alpha-D-ribose 1-diphosphate: step 4/9. This chain is 1-(5-phosphoribosyl)-5-[(5-phosphoribosylamino)methylideneamino] imidazole-4-carboxamide isomerase, found in Flavobacterium johnsoniae (strain ATCC 17061 / DSM 2064 / JCM 8514 / BCRC 14874 / CCUG 350202 / NBRC 14942 / NCIMB 11054 / UW101) (Cytophaga johnsonae).